The primary structure comprises 213 residues: Adenylate kinase (213 aa).

Residue 10–15 participates in ATP binding; that stretch reads GSGKGT. Positions 30-59 are NMP; sequence SVGDLLRNIISSSSELGKKIKGTVESGNLI. Residues Arg-36, 57–59, 83–86, and Gln-90 each bind AMP; these read NLI and GFPR. Residues 125–160 are LID; the sequence is NRLACLDCKSIYSVSSFKSTTCAKCKSTRLEKRIDD. Residue Arg-126 coordinates ATP. The Zn(2+) site is built by Cys-129 and Cys-132. 135-136 is an ATP binding site; sequence IY. Positions 146 and 149 each coordinate Zn(2+). AMP is bound by residues Arg-157 and Arg-169. Leu-195 lines the ATP pocket.

The protein belongs to the adenylate kinase family. Monomer.

The protein resides in the cytoplasm. The catalysed reaction is AMP + ATP = 2 ADP. The protein operates within purine metabolism; AMP biosynthesis via salvage pathway; AMP from ADP: step 1/1. Its function is as follows. Catalyzes the reversible transfer of the terminal phosphate group between ATP and AMP. Plays an important role in cellular energy homeostasis and in adenine nucleotide metabolism. The sequence is that of Adenylate kinase from Wolbachia sp. subsp. Drosophila simulans (strain wRi).